Reading from the N-terminus, the 391-residue chain is Cyclin-A1 (391 aa).

The protein belongs to the cyclin family. Cyclin AB subfamily. As to quaternary structure, interacts with the CDK1 and the CDK2 protein kinases to form a serine/threonine kinase holoenzyme complex. The cyclin subunit imparts substrate specificity to the complex.

The protein localises to the nucleus. Its function is as follows. May be involved in the control of the cell cycle at the G1/S (start) and G2/M (mitosis) transitions. The sequence is that of Cyclin-A1 (ccna1) from Carassius auratus (Goldfish).